The primary structure comprises 338 residues: Phosphoribosylformylglycinamidine cyclo-ligase (338 aa).

It belongs to the AIR synthase family.

The protein resides in the cytoplasm. It carries out the reaction 2-formamido-N(1)-(5-O-phospho-beta-D-ribosyl)acetamidine + ATP = 5-amino-1-(5-phospho-beta-D-ribosyl)imidazole + ADP + phosphate + H(+). It participates in purine metabolism; IMP biosynthesis via de novo pathway; 5-amino-1-(5-phospho-D-ribosyl)imidazole from N(2)-formyl-N(1)-(5-phospho-D-ribosyl)glycinamide: step 2/2. The protein is Phosphoribosylformylglycinamidine cyclo-ligase of Thermoplasma volcanium (strain ATCC 51530 / DSM 4299 / JCM 9571 / NBRC 15438 / GSS1).